We begin with the raw amino-acid sequence, 468 residues long: UDP-N-acetylmuramoylalanine--D-glutamate ligase (468 aa).

127–133 (GTNGKTT) lines the ATP pocket.

The protein belongs to the MurCDEF family.

It localises to the cytoplasm. It carries out the reaction UDP-N-acetyl-alpha-D-muramoyl-L-alanine + D-glutamate + ATP = UDP-N-acetyl-alpha-D-muramoyl-L-alanyl-D-glutamate + ADP + phosphate + H(+). It participates in cell wall biogenesis; peptidoglycan biosynthesis. Functionally, cell wall formation. Catalyzes the addition of glutamate to the nucleotide precursor UDP-N-acetylmuramoyl-L-alanine (UMA). The sequence is that of UDP-N-acetylmuramoylalanine--D-glutamate ligase from Prochlorococcus marinus (strain MIT 9312).